The primary structure comprises 111 residues: Large ribosomal subunit protein P2 (111 aa).

Residues 81–111 form a disordered region; sequence AAGGAAAPAAEEKKEEEKEESDEDMGFGLFD. S101 is modified (phosphoserine).

The protein belongs to the eukaryotic ribosomal protein P1/P2 family. In terms of assembly, P1 and P2 exist as dimers at the large ribosomal subunit.

Plays an important role in the elongation step of protein synthesis. The chain is Large ribosomal subunit protein P2 from Aspergillus fumigatus (strain ATCC MYA-4609 / CBS 101355 / FGSC A1100 / Af293) (Neosartorya fumigata).